A 423-amino-acid chain; its full sequence is Carboxypeptidase B2 (423 aa).

The signal sequence occupies residues 1–22 (MKLYSLGVLVATVLFCGEHAFA). A propeptide spans 23-114 (FQRGQVLSAL…QTSNDTISPR (92 aa)) (activation peptide). Asn44, Asn73, Asn85, and Asn108 each carry an N-linked (GlcNAc...) asparagine glycan. Positions 122–419 (QYHSLNEIYS…VAVAKIASHV (298 aa)) constitute a Peptidase M14 domain. Cys178 and Cys191 are oxidised to a cystine. Zn(2+)-binding residues include His181 and Glu184. Residues 181–184 (HARE) and Arg239 each bind substrate. Asn241 carries N-linked (GlcNAc...) asparagine glycosylation. Cystine bridges form between Cys250–Cys274 and Cys265–Cys279. 256–257 (NR) contributes to the substrate binding site. Zn(2+) is bound at residue His310. Substrate contacts are provided by residues 311-312 (SY) and Tyr363. Glu385 acts as the Proton donor/acceptor in catalysis.

It belongs to the peptidase M14 family. Requires Zn(2+) as cofactor.

Its subcellular location is the secreted. It catalyses the reaction Release of C-terminal Arg and Lys from a polypeptide.. Its activity is regulated as follows. TAFI/CPB2 is unique among carboxypeptidases in that it spontaneously inactivates with a short half-life, a property that is crucial for its role in controlling blood clot lysis. The zymogen is stabilized by interactions with the activation peptide. Release of the activation peptide increases a dynamic flap mobility and in time this leads to conformational changes that disrupt the catalytic site and expose a cryptic thrombin-cleavage site present at Arg-324. In terms of biological role, cleaves C-terminal arginine or lysine residues from biologically active peptides such as kinins or anaphylatoxins in the circulation thereby regulating their activities. Down-regulates fibrinolysis by removing C-terminal lysine residues from fibrin that has already been partially degraded by plasmin. In Bos taurus (Bovine), this protein is Carboxypeptidase B2 (CPB2).